The sequence spans 173 residues: uncharacterized protein (173 aa).

Residues 1-23 form a disordered region; that stretch reads ELTSVAGSGRVDSTPLGSRGVTD.

In terms of tissue distribution, component of the acid-insoluble and acid-soluble organic matrix of calcified layers of the shell (at protein level).

The protein localises to the secreted. This is an uncharacterized protein from Lottia gigantea (Giant owl limpet).